A 229-amino-acid chain; its full sequence is Ribose-5-phosphate isomerase A (229 aa).

Substrate-binding positions include Thr-28–Thr-31, Asp-84–Asp-87, and Lys-97–Gly-100. Glu-106 (proton acceptor) is an active-site residue. Substrate is bound at residue Lys-124.

Belongs to the ribose 5-phosphate isomerase family. Homodimer.

The enzyme catalyses aldehydo-D-ribose 5-phosphate = D-ribulose 5-phosphate. Its pathway is carbohydrate degradation; pentose phosphate pathway; D-ribose 5-phosphate from D-ribulose 5-phosphate (non-oxidative stage): step 1/1. Its function is as follows. Catalyzes the reversible conversion of ribose-5-phosphate to ribulose 5-phosphate. The polypeptide is Ribose-5-phosphate isomerase A (Lacticaseibacillus paracasei (strain ATCC 334 / BCRC 17002 / CCUG 31169 / CIP 107868 / KCTC 3260 / NRRL B-441) (Lactobacillus paracasei)).